A 365-amino-acid chain; its full sequence is Mitogen-activated protein kinase p38b (365 aa).

The 288-residue stretch at 24-311 (YQNLQPVGQG…AEQALAHPYM (288 aa)) folds into the Protein kinase domain. Residues 30-38 (VGQGAYGQV) and K53 contribute to the ATP site. D153 serves as the catalytic Proton acceptor. T183 bears the Phosphothreonine mark. The short motif at 183 to 185 (TGY) is the TXY element. Position 185 is a phosphotyrosine (Y185).

The protein belongs to the protein kinase superfamily. CMGC Ser/Thr protein kinase family. MAP kinase subfamily. Mg(2+) serves as cofactor. In terms of processing, dually phosphorylated on Thr-183 and Tyr-185, which activates the enzyme. At mid-embryogenesis, highest expression is seen in developing anterior and posterior midguts. Almost ubiquitous expression throughout all development.

It localises to the nucleus. It catalyses the reaction L-seryl-[protein] + ATP = O-phospho-L-seryl-[protein] + ADP + H(+). The enzyme catalyses L-threonyl-[protein] + ATP = O-phospho-L-threonyl-[protein] + ADP + H(+). With respect to regulation, activated by threonine and tyrosine phosphorylation by Mkk3. In terms of biological role, kinase involved in dpp signal transduction pathway in the process of wing morphogenesis when the levels of dpp are enhanced or inhibited. May down-regulate insect immunity gene expression after prolonged infection. The protein is Mitogen-activated protein kinase p38b of Drosophila melanogaster (Fruit fly).